The sequence spans 151 residues: 3-dehydroquinate dehydratase (151 aa).

The active-site Proton acceptor is Tyr-24. Substrate-binding residues include Asn-76, His-82, and Asp-89. Residue His-102 is the Proton donor of the active site. Substrate is bound by residues 103-104 (VS) and Arg-113.

The protein belongs to the type-II 3-dehydroquinase family. Homododecamer.

It carries out the reaction 3-dehydroquinate = 3-dehydroshikimate + H2O. It participates in metabolic intermediate biosynthesis; chorismate biosynthesis; chorismate from D-erythrose 4-phosphate and phosphoenolpyruvate: step 3/7. Catalyzes a trans-dehydration via an enolate intermediate. In Rhodopseudomonas palustris (strain TIE-1), this protein is 3-dehydroquinate dehydratase.